We begin with the raw amino-acid sequence, 98 residues long: Dehydrin HIRD11 (98 aa).

Positions 1–98 (MAGLINKIGD…HSSSSDSDSD (98 aa)) are disordered. Residues 19–72 (KEGEHKKEEEHKKHVDEHKSGEHKEGIVDKIKDKIHGGEGKSHDGEGKSHDGEK) are compositionally biased toward basic and acidic residues. Basic residues predominate over residues 73-82 (KKKKDKKEKK).

Belongs to the KS-type dehydrin family. As to quaternary structure, interacts with PXL1. In terms of processing, phosphorylated in vivo. Phosphorylated in vitro by PXL1. Highly expressed in the cambial zone of the stem vasculature (at protein level). Expressed in roots, rosettes leaves, stems, cauline leaves, flowers and siliques.

The protein localises to the cytoplasm. It localises to the nucleus. Intrinsically disordered and metal-binding protein. Binds to the divalent cations cobalt, nickel, copper and zinc, but not to magnesium, calcium, manganese or cadmium. Binding to metal ions decreases disordered state, decreases susceptibility to trypsin and promotes self-association. Can reduce the formation of reactive oxygen species (ROS) in a copper-ascorbate in vitro system. In Arabidopsis thaliana (Mouse-ear cress), this protein is Dehydrin HIRD11.